Here is a 91-residue protein sequence, read N- to C-terminus: uncharacterized protein (91 aa).

Residues 71–91 (NRENNSRSSVKQIINQETEEE) form a disordered region. Residues 76-91 (SRSSVKQIINQETEEE) are compositionally biased toward polar residues.

This is an uncharacterized protein from Bacillus subtilis (strain 168).